The primary structure comprises 441 residues: MDIASKVEGFPTLGILYYTSTLLAVCTYAALIIISIPKTGPASLVRYSSPAIVLTVGKQLFHASYGVSGSLAHRSLTLALTALFILQCCNFLVLTRLDAKDLAKKNIFQDSDHMIYKAYRVVCLIFNVRGIGTPWQAKHLCGFPRFYQRGKGRGPTPIWFILRQSLIVAWQCLLLDIIYTTSMSTPKEDTLKLFGEGTEYMYLDANAEQWTGRFIAGIIAWVIPGRVSIDLPHRVLSIISVFLGFSSPQQWPPLFGSMLDAYTIRGFWSTFWHSYCRWTLTTISSFICRDFLRLPRPSIVERYLNIAFVFLGSAVVHMAIDSFCWGPPMKTKLPTLAFFGSLVVGIIIEDTIQALCRRITGEKRRDGDDGVPVWHKLVGYIWVSFWFMMTSPWYLYHNSRLPPDDTWLVPVSFVDTFGLDTATMLLFGSGVILKFAIGIEV.

Transmembrane regions (helical) follow at residues 14 to 34, 75 to 95, 158 to 178, 306 to 326, 336 to 356, 377 to 397, and 421 to 441; these read GILYYTSTLLAVCTYAALIII, SLTLALTALFILQCCNFLVLT, IWFILRQSLIVAWQCLLLDII, IAFVFLGSAVVHMAIDSFCWG, LAFFGSLVVGIIIEDTIQALC, LVGYIWVSFWFMMTSPWYLYH, and TATMLLFGSGVILKFAIGIEV.

Belongs to the wax synthase family.

It localises to the membrane. It functions in the pathway sesquiterpene biosynthesis; trichothecene biosynthesis. In terms of biological role, acetyltransferase; part of the core gene cluster that mediates the biosynthesis of trichothecenes, a very large family of chemically related bicyclic sesquiterpene compounds acting as mycotoxins, including T2-toxin. The biosynthesis of trichothecenes begins with the cyclization of farnesyl diphosphate to trichodiene and is catalyzed by the trichodiene synthase TRI5. Trichodiene undergoes a series of oxygenations catalyzed by the cytochrome P450 monooxygenase TRI4. TRI4 controls the addition of four oxygens at C-2, C-3, C-11, and the C-12, C-13-epoxide to form the intermediate isotrichotriol. Isotrichotriol then undergoes a non-enzymatic isomerization and cyclization to form isotrichodermol. During this process, the oxygen at the C-2 position becomes the pyran ring oxygen and the hydroxyl group at C-11 is lost. More complex type A trichothecenes are built by modifying isotrichodermol through a series of paired hydroxylation and acetylation or acylation steps. Isotrichodermol is converted to isotrichodermin by the acetyltransferase TRI101. TRI101 encodes a C-3 transacetylase that acts as a self-protection or resistance factor during biosynthesis and that the presence of a free C-3 hydroxyl group is a key component of Fusarium trichothecene phytotoxicity. A second hydroxyl group is added to C-15 by the trichothecene C-15 hydroxylase TRI11, producing 15-decalonectrin, which is then acetylated by TRI3, producing calonectrin. A third hydroxyl group is added at C-4 by the cytochrome P450 monooxygenase TRI13, converting calonectrin to 3,15-diacetoxyspirpenol, which is subsequently acetylated by the acetyltransferase TRI7. A fourth hydroxyl group is added to C-8 by the cytochrome P450 monooxygenase TRI1, followed by the addition of an isovaleryl moiety by TRI16. Finally, the acetyl group is removed from the C-3 position by the trichothecene C-3 esterase TRI8 to produce T-2 toxin. The protein is Acetyltransferase TRI7 of Fusarium sporotrichioides.